The primary structure comprises 462 residues: Toxin CqTX-A (462 aa).

A signal peptide spans 1-19 (MANMLYFSLLALLFMTGIA). N-linked (GlcNAc...) asparagine glycosylation is present at Asn-174.

The protein belongs to the jellyfish toxin family. Type I subfamily. Post-translationally, contains disulfide bonds. In terms of processing, N-glycosylated.

It is found in the secreted. It localises to the nematocyst. The protein localises to the target cell membrane. Its function is as follows. Critical allergen and main toxic protein of C.quadrigatus venom. Has potent hemolytic activity. Is lethal to crayfish. Causes cutaneous inflammation in humans. May act as a pore-forming toxin, disrupting normal transmembrane ion concentration gradients in susceptible cells. This is Toxin CqTX-A from Chiropsoides quadrigatus (Box jellyfish).